The sequence spans 312 residues: MSAALERLNHLNLNHLYAFVAVAEHNSFTAAAEALGLSKSLLSEQLRRLEADLGIQLLTRTTRRMTLTDRGELLFGVAQRMLGELDGALSDVRDLQGEPSGRLRITAPQDFVKWHISSVSAAFIRQFPKVQVEMLADDQFSDLVGQRIDLAVRIGWPRDSGLHASKLCDFQQVAVATPGYLAGLPPVLQPHDLARCEWIGHTRLSTPWTWTFERQRERATVQTRGRLLANNTLAVYRLVLDGAGVSVLPSFLVAREIARGRLVRLLPGWRLPQGGIYALYPSARYMPVRVRAFIESLREHLGREPFRLAQSE.

An HTH lysR-type domain is found at Leu-11–Thr-68. Positions Phe-28–Arg-47 form a DNA-binding region, H-T-H motif.

The protein belongs to the LysR transcriptional regulatory family. In terms of assembly, monomer in solution. May dimerize on binding to DNA. Interacts with PtxS in the absence of 2-ketogluconate. Binding of the 2-ketogluconate effector to PtxS causes PtxS/PtxR complex dissociation.

With respect to regulation, negatively regulated by PtxS, which interacts with PtxR and prevents its activity. Plays an important role in the regulation of the production of the virulence factor exotoxin A (toxA), via positive regulation of the transcription of the toxA gene. Acts by binding directly to the toxA promoter region. Besides toxA, PtxR modulates the expression of genes that code for the QS-controlled virulence factors. It negatively regulates the expression of the rhamnolipid and pyocyanine genes, through the autoinducer synthase RhlI, and the PQS synthesis operon pqsABCDE, while it positively regulates the expression of lasB through the autoinducer synthase LasI. Also positively regulates the expression of the exotoxin A regulatory protein (toxR or regA). Its function is as follows. In addition, is involved in the positive regulation of glucose metabolism via the regulation of the expression of the kgu and gad operons. Acts by binding directly to the promoter region of the kgu and gad operons. The chain is HTH-type transcriptional regulator PtxR from Pseudomonas aeruginosa (strain ATCC 15692 / DSM 22644 / CIP 104116 / JCM 14847 / LMG 12228 / 1C / PRS 101 / PAO1).